The following is a 207-amino-acid chain: Dephospho-CoA kinase (207 aa).

Residues 10 to 207 (ILGLTGGIGS…FYLTLRGGQP (198 aa)) enclose the DPCK domain. An ATP-binding site is contributed by 18–23 (GSGKSA).

It belongs to the CoaE family.

It localises to the cytoplasm. It carries out the reaction 3'-dephospho-CoA + ATP = ADP + CoA + H(+). Its pathway is cofactor biosynthesis; coenzyme A biosynthesis; CoA from (R)-pantothenate: step 5/5. Catalyzes the phosphorylation of the 3'-hydroxyl group of dephosphocoenzyme A to form coenzyme A. This Pseudomonas putida (Arthrobacter siderocapsulatus) protein is Dephospho-CoA kinase.